The sequence spans 188 residues: UPF0301 protein Smlt1098 (188 aa).

It belongs to the UPF0301 (AlgH) family.

The sequence is that of UPF0301 protein Smlt1098 from Stenotrophomonas maltophilia (strain K279a).